Consider the following 259-residue polypeptide: 3-deoxy-manno-octulosonate cytidylyltransferase 1 (259 aa).

It belongs to the KdsB family.

It localises to the cytoplasm. The catalysed reaction is 3-deoxy-alpha-D-manno-oct-2-ulosonate + CTP = CMP-3-deoxy-beta-D-manno-octulosonate + diphosphate. It participates in nucleotide-sugar biosynthesis; CMP-3-deoxy-D-manno-octulosonate biosynthesis; CMP-3-deoxy-D-manno-octulosonate from 3-deoxy-D-manno-octulosonate and CTP: step 1/1. It functions in the pathway bacterial outer membrane biogenesis; lipopolysaccharide biosynthesis. Functionally, activates KDO (a required 8-carbon sugar) for incorporation into bacterial lipopolysaccharide in Gram-negative bacteria. This chain is 3-deoxy-manno-octulosonate cytidylyltransferase 1, found in Hydrogenovibrio crunogenus (strain DSM 25203 / XCL-2) (Thiomicrospira crunogena).